The following is a 73-amino-acid chain: Guanine nucleotide-binding protein G(I)/G(S)/G(O) subunit gamma-11 (73 aa).

A disordered region spans residues D51–S73. Cysteine methyl ester is present on C70. C70 is lipidated: S-farnesyl cysteine. Residues V71–S73 constitute a propeptide, removed in mature form.

This sequence belongs to the G protein gamma family. G proteins are composed of 3 units, alpha, beta and gamma. Interacts with beta-1 and beta-3, but not with beta-2. In terms of tissue distribution, abundantly expressed in all tissues tested except for brain.

Its subcellular location is the cell membrane. Its function is as follows. Guanine nucleotide-binding proteins (G proteins) are involved as a modulator or transducer in various transmembrane signaling systems. The beta and gamma chains are required for the GTPase activity, for replacement of GDP by GTP, and for G protein-effector interaction. The chain is Guanine nucleotide-binding protein G(I)/G(S)/G(O) subunit gamma-11 (GNG11) from Homo sapiens (Human).